The chain runs to 355 residues: Plasmodial-specific protein LAV1-2 (355 aa).

2 EF-hand domains span residues 151–186 (EDTNILRQLFLSSAVSGSGKFSFQDLKQVLAKYADT) and 217–252 (NDLAALVADFRKIDTNSNGTLSRKEFREHFVRLGFD). Residues aspartate 230, asparagine 232, asparagine 234, threonine 236, glutamate 241, aspartate 265, aspartate 267, serine 269, aspartate 271, glutamate 276, aspartate 295, aspartate 297, serine 299, glutamine 301, glutamate 306, aspartate 332, aspartate 334, serine 336, serine 338, and glutamate 343 each contribute to the Ca(2+) site. 2 consecutive EF-hand domains span residues 282-317 (LCLLVLRILYAFADFDKSGQLSKEEVQKVLEDAHIP) and 319-354 (SARKKFEHQFSVVDVDDSKSLSYQEFVMLVLLMFHD).

This Physarum polycephalum (Slime mold) protein is Plasmodial-specific protein LAV1-2.